Reading from the N-terminus, the 203-residue chain is Non-histone protein 10 (203 aa).

N-acetylserine is present on S2. Disordered regions lie at residues 78–97 (KSKT…PKRP) and 161–203 (ISNI…VSSN). The segment at residues 94 to 158 (PKRPTNAYLL…RYQMEMEIYN (65 aa)) is a DNA-binding region (HMG box).

As to quaternary structure, component of the chromatin-remodeling INO80 complex, at least composed of ARP4, ARP5, ARP8, RVB1, RVB2, TAF14, NHP10, IES1, IES3, IES4, IES6, ACT1, IES2, IES5 and INO80.

The protein localises to the nucleus. Its function is as follows. Probably involved in transcription regulation via its interaction with the INO80 complex, a chromatin remodeling complex. This chain is Non-histone protein 10 (NHP10), found in Saccharomyces cerevisiae (strain ATCC 204508 / S288c) (Baker's yeast).